A 220-amino-acid chain; its full sequence is Adapter protein MecA (220 aa).

This sequence belongs to the MecA family. In terms of assembly, homodimer.

Its function is as follows. Enables the recognition and targeting of unfolded and aggregated proteins to the ClpC protease or to other proteins involved in proteolysis. This is Adapter protein MecA from Macrococcus caseolyticus (strain JCSC5402) (Macrococcoides caseolyticum).